The primary structure comprises 153 residues: Fucose mutarotase (153 aa).

Catalysis depends on His-24, which acts as the Proton donor. Residue Asp-32 participates in substrate binding. The active site involves Asp-69. Substrate-binding residues include Met-78, Tyr-119, Tyr-137, and Asn-139. The active site involves Tyr-119.

Belongs to the RbsD / FucU family.

The enzyme catalyses alpha-L-fucose = beta-L-fucose. In terms of biological role, involved in the interconversion between alpha- and beta-L-fucoses. This Danio rerio (Zebrafish) protein is Fucose mutarotase (fuom).